Here is a 323-residue protein sequence, read N- to C-terminus: Penicillopepsin-1 (323 aa).

An O-linked (Man...) serine glycan is attached at Ser3. O-linked (Man...) threonine glycosylation is present at Thr7. Residues 17–320 (YITPVTIGGT…DSDGPQLGFA (304 aa)) enclose the Peptidase A1 domain. Catalysis depends on residues Asp33 and Asp213. A disulfide bridge links Cys249 with Cys283.

The protein belongs to the peptidase A1 family. Monomer.

The protein localises to the secreted. The enzyme catalyses Hydrolysis of proteins with broad specificity similar to that of pepsin A, preferring hydrophobic residues at P1 and P1', but also cleaving 20-Gly-|-Glu-21 in the B chain of insulin. Clots milk, and activates trypsinogen.. In terms of biological role, secreted aspartic endopeptidase that allows assimilation of proteinaceous substrates. The scissile peptide bond is attacked by a nucleophilic water molecule activated by two aspartic residues in the active site. Shows a broad primary substrate specificity. Favors hydrophobic residues at the P1 and P1' positions, but can also activate trypsinogen and hydrolyze the B chain of insulin between positions 'Gly-20' and 'Glu-21'. In Penicillium janthinellum (Penicillium vitale), this protein is Penicillopepsin-1.